The sequence spans 445 residues: Phosphoglucosamine mutase (445 aa).

Residue S102 is the Phosphoserine intermediate of the active site. Mg(2+) contacts are provided by S102, D240, D242, and D244. Residue S102 is modified to Phosphoserine.

Belongs to the phosphohexose mutase family. Mg(2+) serves as cofactor. Post-translationally, activated by phosphorylation.

The enzyme catalyses alpha-D-glucosamine 1-phosphate = D-glucosamine 6-phosphate. Catalyzes the conversion of glucosamine-6-phosphate to glucosamine-1-phosphate. This Mycobacterium sp. (strain JLS) protein is Phosphoglucosamine mutase.